The sequence spans 299 residues: Probable lipid kinase YegS (299 aa).

A DAGKc domain is found at alanine 2–threonine 133. Residues threonine 40, glycine 66 to glutamate 72, and threonine 95 each bind ATP. Mg(2+) contacts are provided by leucine 215, aspartate 218, and leucine 220. Glutamate 271 acts as the Proton acceptor in catalysis.

It belongs to the diacylglycerol/lipid kinase family. YegS lipid kinase subfamily. It depends on Mg(2+) as a cofactor. Ca(2+) is required as a cofactor.

It localises to the cytoplasm. In terms of biological role, probably phosphorylates lipids; the in vivo substrate is unknown. This Escherichia coli O45:K1 (strain S88 / ExPEC) protein is Probable lipid kinase YegS.